Reading from the N-terminus, the 484-residue chain is Glutamate--tRNA ligase (484 aa).

The short motif at 11-21 is the 'HIGH' region element; that stretch reads PSPTGYLHIGN. The 'KMSKS' region motif lies at 252 to 256; the sequence is KLSKR. Lysine 255 contacts ATP.

It belongs to the class-I aminoacyl-tRNA synthetase family. Glutamate--tRNA ligase type 1 subfamily. Monomer.

It is found in the cytoplasm. It catalyses the reaction tRNA(Glu) + L-glutamate + ATP = L-glutamyl-tRNA(Glu) + AMP + diphosphate. Catalyzes the attachment of glutamate to tRNA(Glu) in a two-step reaction: glutamate is first activated by ATP to form Glu-AMP and then transferred to the acceptor end of tRNA(Glu). The polypeptide is Glutamate--tRNA ligase (Staphylococcus aureus (strain Mu3 / ATCC 700698)).